A 1026-amino-acid polypeptide reads, in one-letter code: Multidrug resistance protein MdtC (1026 aa).

The next 11 helical transmembrane spans lie at 15 to 35 (ILIAAAITLCGILGFRLLPVA), 333 to 353 (EVEETLAISVALVILVVFLFL), 360 to 380 (LIPAVAVPVSLIGTFAAMYLC), 387 to 407 (LSLMALTIATGFVVDDAIVVL), 431 to 451 (VGFTVISMSLSLVAVFLPLLL), 463 to 483 (FAVTLSVAIGISLVVSLTLTP), 528 to 548 (LVGVVFLGTVALNIWLYIAIP), 853 to 873 (LILIVAAIATVYIVLGILYES), 897 to 917 (LFNAPFSLIALIGIMLLIGIV), 953 to 973 (PIMMTTLAALFGALPLVLSGG), and 984 to 1004 (ITIVGGLVMSQLLTLYTTPVV).

Belongs to the resistance-nodulation-cell division (RND) (TC 2.A.6) family. MdtC subfamily. As to quaternary structure, part of a tripartite efflux system composed of MdtA, MdtB and MdtC. MdtC forms a heteromultimer with MdtB.

Its subcellular location is the cell inner membrane. This Salmonella dublin (strain CT_02021853) protein is Multidrug resistance protein MdtC.